Reading from the N-terminus, the 957-residue chain is Glycine dehydrogenase (decarboxylating) (957 aa).

At Lys708 the chain carries N6-(pyridoxal phosphate)lysine.

This sequence belongs to the GcvP family. In terms of assembly, the glycine cleavage system is composed of four proteins: P, T, L and H. Pyridoxal 5'-phosphate is required as a cofactor.

The catalysed reaction is N(6)-[(R)-lipoyl]-L-lysyl-[glycine-cleavage complex H protein] + glycine + H(+) = N(6)-[(R)-S(8)-aminomethyldihydrolipoyl]-L-lysyl-[glycine-cleavage complex H protein] + CO2. Functionally, the glycine cleavage system catalyzes the degradation of glycine. The P protein binds the alpha-amino group of glycine through its pyridoxal phosphate cofactor; CO(2) is released and the remaining methylamine moiety is then transferred to the lipoamide cofactor of the H protein. The chain is Glycine dehydrogenase (decarboxylating) from Escherichia coli O81 (strain ED1a).